The chain runs to 161 residues: MKNSSNKYLDLPYRPGVGMMILNADNQIFVGKRIDTKISAWQMPQGGIVPGETPSIAAMREMLEEIGSNKGYIIAESKCWYSYDVPSFLIPKLWNGNFRGQKQRWFLIRFTGNNKDINIHTSNPEFDQWRWTSLDELLSIIIPFKRKLYQAVVKEFESLIQ.

In terms of domain architecture, Nudix hydrolase spans 12-154 (PYRPGVGMMI…KRKLYQAVVK (143 aa)). The Nudix box signature appears at 46 to 67 (GGIVPGETPSIAAMREMLEEIG).

It belongs to the Nudix hydrolase family. RppH subfamily. Requires a divalent metal cation as cofactor.

Its function is as follows. Accelerates the degradation of transcripts by removing pyrophosphate from the 5'-end of triphosphorylated RNA, leading to a more labile monophosphorylated state that can stimulate subsequent ribonuclease cleavage. This is RNA pyrophosphohydrolase from Rickettsia typhi (strain ATCC VR-144 / Wilmington).